A 436-amino-acid polypeptide reads, in one-letter code: uncharacterized protein (436 aa).

The first 19 residues, 1–19, serve as a signal peptide directing secretion; it reads MKKLLLASIIGLASTTSFA.

This is an uncharacterized protein from Rickettsia bellii (strain RML369-C).